The sequence spans 1064 residues: MATPPYAELHCLSNYSFLRGASHPEELVARAWALGYQGLAITDECSLAGAVRAHTGLAELRRDLRAAADAPEASAQDRLLAERAEQFRLVFGAEFRLACGLKLVLLAKNRAGYGNLSALITLARQRSEKGSYRLVRADLDAISPAGAVPDCYALWLPDAASSAEDAHWFARRFGERGWLAVELHSGADDAAWLGRTAELAAAAGLPRLAAGDVHMHLRGRRPLQDTLTAIRLGTTVFEAGTALHPNGERHLRHPLRLARLYPAELLEAAARLALACDFQLDTLRYEYPQEIVPAGETPASYLRRETQAGLARRYPQGVPPAIADNVEQELALIIELGYEPFFLTVYDIVCFARDEGILCQGRGSAANSIVCYALGITEVDPARASLLFGRFISRERDEPPDIDVDFEHDRRETVIQYIYGKYGRDRAALAATVIRYRTRGALRDAGRALGFGQPQIDALARSLAWWDKRDQLPARLIELGLDPASPRVAKWLDLTGMLIGFPRHLSQHVGGFVISRGPLGRLVPIENAAMPERSVIQWDKEDLEALGLLKVDVLALGMLSVIRRSLELVGRRRGAPFALPHIPPKDAATFDMLCAADSVGVFQVESRAQMAMLPRLRPRQFYDLVVQVAIVRPGPIQGDMVHPYLTNRADPAASARTLARLPADVRAVLERTLGVPIFQEQVMKLAEVAAGFTPGEADQLRRAMASWRQKGHIERFKQKLRDGMKARGHDSDFADALCRQIEGFGEYGFPESHAASFALLAYASAWLKRHEPEAFLCGLLNSQPMGFYAPAQLLQDARRHGVEVRPVDVTASAWDATLEDLPADPDAGRRPAVRLGLREISGFPEAAALRVAEARAAAPFADTNDLARRAALQRRELDLLAAAGALQALAGHRRQAAWQVAGVCLQGDLFDAAPPPEAAVALAAPQEAEELLADYAATGFSLGRHPLALLRARLARGRFLQAAALARTPDRALVRVAGIVTGRQRPGTAQGVIFVTLEDETGSANVVVYAGLAERQRRELLGARLLGVFGQLQREGEVVHLLAKRLVDLSPWVGGLAARSRDFH.

Belongs to the DNA polymerase type-C family. DnaE2 subfamily.

The protein localises to the cytoplasm. It carries out the reaction DNA(n) + a 2'-deoxyribonucleoside 5'-triphosphate = DNA(n+1) + diphosphate. DNA polymerase involved in damage-induced mutagenesis and translesion synthesis (TLS). It is not the major replicative DNA polymerase. The protein is Error-prone DNA polymerase of Azoarcus sp. (strain BH72).